The chain runs to 338 residues: Aspartate carbamoyltransferase catalytic subunit (338 aa).

Residues R71 and T72 each coordinate carbamoyl phosphate. Position 99 (K99) interacts with L-aspartate. Positions 121, 151, and 154 each coordinate carbamoyl phosphate. The L-aspartate site is built by R184 and R239. Positions 280 and 281 each coordinate carbamoyl phosphate.

The protein belongs to the aspartate/ornithine carbamoyltransferase superfamily. ATCase family. In terms of assembly, heterododecamer (2C3:3R2) of six catalytic PyrB chains organized as two trimers (C3), and six regulatory PyrI chains organized as three dimers (R2).

The catalysed reaction is carbamoyl phosphate + L-aspartate = N-carbamoyl-L-aspartate + phosphate + H(+). It participates in pyrimidine metabolism; UMP biosynthesis via de novo pathway; (S)-dihydroorotate from bicarbonate: step 2/3. Catalyzes the condensation of carbamoyl phosphate and aspartate to form carbamoyl aspartate and inorganic phosphate, the committed step in the de novo pyrimidine nucleotide biosynthesis pathway. In Stutzerimonas stutzeri (strain A1501) (Pseudomonas stutzeri), this protein is Aspartate carbamoyltransferase catalytic subunit.